We begin with the raw amino-acid sequence, 185 residues long: Lysine-rich arabinogalactan protein 17 (185 aa).

Positions 1 to 21 are cleaved as a signal peptide; that stretch reads MTRNILLTVTLICIVFITVGG. The interval 25–160 is disordered; it reads ATAPIHSPST…FSPAADDQSG (136 aa). Low complexity predominate over residues 43–68; that stretch reads SPAISPAAPTPESTEAPAKTPVEAPV. The segment covering 69-88 has biased composition (pro residues); sequence EAPPSPTPASTPQISPPAPS. Over residues 111 to 122 the composition is skewed to basic residues; that stretch reads TKHKKKTKKHKT. Pro residues predominate over residues 135–146; sequence PPAPPGEAPGPG. A lipid anchor (GPI-anchor amidated serine) is attached at Ser-159. Residues 160 to 185 constitute a propeptide, removed in mature form; that stretch reads GAQRISVVIQMVGAAAIAWSLLVLAF.

Belongs to the lysine-rich AGP family. Post-translationally, O-glycosylated on the hydroxyproline residues. In terms of tissue distribution, predominantly expressed in open flowers. Also expressed in leaves and stems, and at a lower level in roots.

The protein localises to the cell membrane. Functionally, proteoglycan that seems to be implicated in diverse developmental roles such as differentiation, cell-cell recognition, embryogenesis and programmed cell death. The protein is Lysine-rich arabinogalactan protein 17 (AGP17) of Arabidopsis thaliana (Mouse-ear cress).